Here is a 267-residue protein sequence, read N- to C-terminus: Formamidopyrimidine-DNA glycosylase (267 aa).

Pro-2 acts as the Schiff-base intermediate with DNA in catalysis. The active-site Proton donor is Glu-3. Lys-58 functions as the Proton donor; for beta-elimination activity in the catalytic mechanism. The DNA site is built by His-91, Arg-110, and Arg-152. The FPG-type zinc-finger motif lies at 233 to 267 (DVYGRGHGTCTSCGGALEAVRLGNRSTVFCPRCQQ). The active-site Proton donor; for delta-elimination activity is the Arg-257.

The protein belongs to the FPG family. Monomer. It depends on Zn(2+) as a cofactor.

The catalysed reaction is Hydrolysis of DNA containing ring-opened 7-methylguanine residues, releasing 2,6-diamino-4-hydroxy-5-(N-methyl)formamidopyrimidine.. It carries out the reaction 2'-deoxyribonucleotide-(2'-deoxyribose 5'-phosphate)-2'-deoxyribonucleotide-DNA = a 3'-end 2'-deoxyribonucleotide-(2,3-dehydro-2,3-deoxyribose 5'-phosphate)-DNA + a 5'-end 5'-phospho-2'-deoxyribonucleoside-DNA + H(+). In terms of biological role, involved in base excision repair of DNA damaged by oxidation or by mutagenic agents. Acts as a DNA glycosylase that recognizes and removes damaged bases. Has a preference for oxidized purines, such as 7,8-dihydro-8-oxoguanine (8-oxoG). Has AP (apurinic/apyrimidinic) lyase activity and introduces nicks in the DNA strand. Cleaves the DNA backbone by beta-delta elimination to generate a single-strand break at the site of the removed base with both 3'- and 5'-phosphates. The chain is Formamidopyrimidine-DNA glycosylase from Pelobacter propionicus (strain DSM 2379 / NBRC 103807 / OttBd1).